A 239-amino-acid polypeptide reads, in one-letter code: Ras-like protein B (239 aa).

Residues 13 to 18 (GVGKTA), 29 to 35 (VETYDPT), 59 to 60 (AG), 139 to 142 (NKSD), and 169 to 171 (SAK) each bind GTP. The Effector region motif lies at 32 to 40 (YDPTIEDSY). Positions 191–227 (RQQQQGGRAQDRRPTGLGPMRDRDAGPEYPKTFRPDR) are disordered. The segment covering 199-226 (AQDRRPTGLGPMRDRDAGPEYPKTFRPD) has biased composition (basic and acidic residues).

This sequence belongs to the small GTPase superfamily. Ras family. In terms of assembly, interacts with mpkA.

It catalyses the reaction GTP + H2O = GDP + phosphate + H(+). Ras-like protein involved in the activation of Ras protein signal transduction. Ras proteins bind GDP/GTP and possess intrinsic GTPase activity. Plays a role in hyphal morphology and conidiophore development. Required for full virulence. The protein is Ras-like protein B of Aspergillus fumigatus (strain ATCC MYA-4609 / CBS 101355 / FGSC A1100 / Af293) (Neosartorya fumigata).